The following is a 113-amino-acid chain: T cell receptor alpha variable 12-2 (113 aa).

A signal peptide spans 1–20 (MKSLRVLLVILWLQLSWVWS). Positions 23-113 (KEVEQNSGPL…DSATYLCAVN (91 aa)) constitute an Ig-like domain. Asparagine 43 carries an N-linked (GlcNAc...) asparagine glycan. An intrachain disulfide couples cysteine 44 to cysteine 110.

As to quaternary structure, alpha-beta TR is a heterodimer composed of an alpha and beta chain; disulfide-linked. The alpha-beta TR is associated with the transmembrane signaling CD3 coreceptor proteins to form the TR-CD3 (TcR or TCR). The assembly of alpha-beta TR heterodimers with CD3 occurs in the endoplasmic reticulum where a single alpha-beta TR heterodimer associates with one CD3D-CD3E heterodimer, one CD3G-CD3E heterodimer and one CD247 homodimer forming a stable octameric structure. CD3D-CD3E and CD3G-CD3E heterodimers preferentially associate with TR alpha and TR beta chains, respectively. The association of the CD247 homodimer is the last step of TcR assembly in the endoplasmic reticulum and is required for transport to the cell surface.

The protein resides in the cell membrane. Functionally, v region of the variable domain of T cell receptor (TR) alpha chain that participates in the antigen recognition. Alpha-beta T cell receptors are antigen specific receptors which are essential to the immune response and are present on the cell surface of T lymphocytes. Recognize peptide-major histocompatibility (MH) (pMH) complexes that are displayed by antigen presenting cells (APC), a prerequisite for efficient T cell adaptive immunity against pathogens. Binding of alpha-beta TR to pMH complex initiates TR-CD3 clustering on the cell surface and intracellular activation of LCK that phosphorylates the ITAM motifs of CD3G, CD3D, CD3E and CD247 enabling the recruitment of ZAP70. In turn ZAP70 phosphorylates LAT, which recruits numerous signaling molecules to form the LAT signalosome. The LAT signalosome propagates signal branching to three major signaling pathways, the calcium, the mitogen-activated protein kinase (MAPK) kinase and the nuclear factor NF-kappa-B (NF-kB) pathways, leading to the mobilization of transcription factors that are critical for gene expression and essential for T cell growth and differentiation. The T cell repertoire is generated in the thymus, by V-(D)-J rearrangement. This repertoire is then shaped by intrathymic selection events to generate a peripheral T cell pool of self-MH restricted, non-autoaggressive T cells. Post-thymic interaction of alpha-beta TR with the pMH complexes shapes TR structural and functional avidity. The protein is T cell receptor alpha variable 12-2 of Homo sapiens (Human).